The chain runs to 354 residues: Fructose-bisphosphate aldolase 2 (354 aa).

Ser50 lines the D-glyceraldehyde 3-phosphate pocket. Residue Asp83 is the Proton donor of the active site. Positions 84, 105, 142, and 198 each coordinate Zn(2+). Gly199 is a dihydroxyacetone phosphate binding site. His232 is a Zn(2+) binding site. Residues 233–235 and 275–278 each bind dihydroxyacetone phosphate; these read GSS and NIDT.

This sequence belongs to the class II fructose-bisphosphate aldolase family. Homodimer. Requires Zn(2+) as cofactor.

It carries out the reaction beta-D-fructose 1,6-bisphosphate = D-glyceraldehyde 3-phosphate + dihydroxyacetone phosphate. The protein operates within carbohydrate biosynthesis; Calvin cycle. It functions in the pathway carbohydrate degradation; glycolysis; D-glyceraldehyde 3-phosphate and glycerone phosphate from D-glucose: step 4/4. Catalyzes the aldol condensation of dihydroxyacetone phosphate (DHAP or glycerone-phosphate) with glyceraldehyde 3-phosphate (G3P) to form fructose 1,6-bisphosphate (FBP) in gluconeogenesis and the reverse reaction in glycolysis. The protein is Fructose-bisphosphate aldolase 2 (cfxB) of Cereibacter sphaeroides (Rhodobacter sphaeroides).